Here is a 174-residue protein sequence, read N- to C-terminus: Adenylate kinase (174 aa).

The tract at residues 12–41 (STGDMLRAAIKAGTLLGLEAKKIIDEGGLV) is NMP. Residues Thr-13, Arg-18, 39–41 (GLV), 67–70 (GFPR), and Gln-74 each bind AMP. The interval 104–141 (GRRVHLASGRTYHVTYNPPKVEGKDDVTGEDLIQRDDD) is LID. ATP is bound by residues Arg-105 and 114 to 115 (TY). The AMP site is built by Arg-138 and Arg-149.

Belongs to the adenylate kinase family. In terms of assembly, monomer.

It is found in the cytoplasm. It carries out the reaction AMP + ATP = 2 ADP. It functions in the pathway purine metabolism; AMP biosynthesis via salvage pathway; AMP from ADP: step 1/1. Catalyzes the reversible transfer of the terminal phosphate group between ATP and AMP. Plays an important role in cellular energy homeostasis and in adenine nucleotide metabolism. The chain is Adenylate kinase from Neisseria polysaccharea.